A 492-amino-acid polypeptide reads, in one-letter code: Solute carrier family 2, facilitated glucose transporter member 1 (492 aa).

Met-1 carries the N-acetylmethionine modification. At 1 to 11 (MEPSSKKVTGR) the chain is on the cytoplasmic side. The helical transmembrane segment at 12 to 33 (LMLAVGGAVLGSLQFGYNTGVI) threads the bilayer. Topologically, residues 34-66 (NAPQKVIEEFYNQTWIHRYGERILPTTLTTLWS) are extracellular. N-linked (GlcNAc...) asparagine glycosylation is present at Asn-45. Residues 67–87 (LSVAIFSVGGMIGSFSVGLFV) traverse the membrane as a helical segment. At 88 to 90 (NRF) the chain is on the cytoplasmic side. Residues 91-112 (GRRNSMLMMNLLAFVSAVLMGF) traverse the membrane as a helical segment. At 113-120 (SKLAKSFE) the chain is on the extracellular side. Residues 121–144 (MLILGRFIIGVYCGLTTGFVPMYV) traverse the membrane as a helical segment. The Cytoplasmic portion of the chain corresponds to 145 to 155 (GEVSPTALRGA). The helical transmembrane segment at 156–176 (LGTLHQLGIVVGILIAQVFGL) threads the bilayer. Gln-161 lines the D-glucose pocket. Over 177–185 (DSIMGNEDL) the chain is Extracellular. A helical transmembrane segment spans residues 186–206 (WPLLLSVIFVPALLQCIVLPL). The Cytoplasmic portion of the chain corresponds to 207–271 (CPESPRFLLI…LFRSPAYRQP (65 aa)). A Phosphoserine modification is found at Ser-226. A helical membrane pass occupies residues 272 to 293 (ILSAVVLQLSQQLSGINAVFYY). D-glucose-binding positions include 282-283 (QQ) and Asn-288. Residues 294 to 306 (STSIFEKAGVQQP) are Extracellular-facing. A helical transmembrane segment spans residues 307-328 (VYATIGSGIVNTAFTVVSLFVV). Residue Asn-317 participates in D-glucose binding. Residues 329 to 334 (ERAGRR) are Cytoplasmic-facing. Residues 335–355 (TLHLIGLAGMAACAVLMTIAL) form a helical membrane-spanning segment. At 356–365 (ALLEQLPWMS) the chain is on the extracellular side. A helical transmembrane segment spans residues 366 to 388 (YLSIVAIFGFVAFFEVGPGPIPW). D-glucose-binding residues include Glu-380 and Trp-388. The Cytoplasmic portion of the chain corresponds to 389 to 401 (FIVAELFSQGPRP). The chain crosses the membrane as a helical span at residues 402–422 (AAVAVAGFSNWTSNFIVGMCF). Topologically, residues 423–429 (QYVEQLC) are extracellular. Residues 430 to 450 (GPYVFIIFTVLLVLFFIFTYF) traverse the membrane as a helical segment. At 451 to 492 (KVPETKGRTFDEIASGFRQGGASQSDKTPEELFHPLGADSQV) the chain is on the cytoplasmic side. Phosphoserine is present on Ser-465. The tract at residues 468-492 (RQGGASQSDKTPEELFHPLGADSQV) is disordered. Thr-478 bears the Phosphothreonine mark. Phosphoserine is present on Ser-490.

The protein belongs to the major facilitator superfamily. Sugar transporter (TC 2.A.1.1) family. Glucose transporter subfamily. Found in a complex with ADD2, DMTN and SLC2A1. Interacts (via C-terminus cytoplasmic region) with DMTN. Interacts with SNX27; the interaction is required when endocytosed to prevent degradation in lysosomes and promote recycling to the plasma membrane. Interacts with GIPC (via PDZ domain). Interacts with STOM. Interacts with SGTA (via Gln-rich region). Interacts with BSG. Interacts with SMIM43; the interaction may promote SLC2A1-mediated glucose transport to meet the energy needs of mesendoderm differentiation. In terms of processing, phosphorylation at Ser-226 by PKC promotes glucose uptake by increasing cell membrane localization.

It is found in the cell membrane. Its subcellular location is the photoreceptor inner segment. The catalysed reaction is D-glucose(out) = D-glucose(in). Its activity is regulated as follows. The uptake of glucose is inhibited by cytochalasin B. Glucose uptake is increased in response to phorbol ester 12-O-tetradecanoylphorbol-13-acetate (TPA) treatment: TPA-induced glucose uptake requires phosphorylation at Ser-226. Its function is as follows. Facilitative glucose transporter, which is responsible for constitutive or basal glucose uptake. Has a very broad substrate specificity; can transport a wide range of aldoses including both pentoses and hexoses. Most important energy carrier of the brain: present at the blood-brain barrier and assures the energy-independent, facilitative transport of glucose into the brain. In association with BSG and NXNL1, promotes retinal cone survival by increasing glucose uptake into photoreceptors. Required for mesendoderm differentiation. The sequence is that of Solute carrier family 2, facilitated glucose transporter member 1 from Oryctolagus cuniculus (Rabbit).